The following is a 388-amino-acid chain: Succinyl-diaminopimelate desuccinylase (388 aa).

Histidine 72 contributes to the Zn(2+) binding site. The active site involves aspartate 74. Residue aspartate 105 participates in Zn(2+) binding. The active-site Proton acceptor is glutamate 139. Zn(2+) is bound by residues glutamate 140, glutamate 168, and histidine 353.

It belongs to the peptidase M20A family. DapE subfamily. As to quaternary structure, homodimer. It depends on Zn(2+) as a cofactor. The cofactor is Co(2+).

The enzyme catalyses N-succinyl-(2S,6S)-2,6-diaminopimelate + H2O = (2S,6S)-2,6-diaminopimelate + succinate. The protein operates within amino-acid biosynthesis; L-lysine biosynthesis via DAP pathway; LL-2,6-diaminopimelate from (S)-tetrahydrodipicolinate (succinylase route): step 3/3. Functionally, catalyzes the hydrolysis of N-succinyl-L,L-diaminopimelic acid (SDAP), forming succinate and LL-2,6-diaminopimelate (DAP), an intermediate involved in the bacterial biosynthesis of lysine and meso-diaminopimelic acid, an essential component of bacterial cell walls. The sequence is that of Succinyl-diaminopimelate desuccinylase from Orientia tsutsugamushi (strain Boryong) (Rickettsia tsutsugamushi).